The primary structure comprises 231 residues: Extracellular deoxyribonuclease (231 aa).

Residues 1–20 form the signal peptide; the sequence is MMIFRFVTTLAASLPLLTFA.

It belongs to the EndA/NucM nuclease family.

It is found in the secreted. In Vibrio cholerae serotype O1 (strain ATCC 39315 / El Tor Inaba N16961), this protein is Extracellular deoxyribonuclease (dns).